A 971-amino-acid chain; its full sequence is MNNEALAEDPPTPLWELVLEQFKDQLVLILLGSAAVSFVLALFEEGDDWTAFVDPVVILTILILNAVVGVTQESSAEKAIAALQEYSANEATVVRDGKTQRIKAEDLVPGDIIHIGVGDRVPADCRLLAIQSNSFRVDQAVLTGESESVSKDTRSIKDEQAVKQDQTNILFSGTSVVNGHATAIVVLTGASTAIGGIHESITSQISEPTPLKQKLNDFGDMLAKVITVICVLVWLINVEHFNDPAHGGWAKGAIYYLKIAVSLGVAAIPEGLAVVITTCLALGTRKMAAKNAVVRSLPSVETLGSCSVICSDKTGTLTTNQMSVEKLVYLNASGDDLEEIDVEGTTFAPEGKLSRNGKVLQNLAVTSSTVRQMAEVMALCNSATLAHDPKSGTFSCIGEPTEGALRVLVEKIGTDDMATNEKLFRLPASQRLHVSSAHYESRLPLLATYEFSRDRKSMSVLVTKDKAQRLLVKGAPESILERCSYVLLGPDGPRVPLTRVYSDLLAREVVEYGNRGLRVIALASVDDIADNPLLHNAQTTEEYAQLERNMTLIGLVGMLDPPRTEVADSVKKCRAAGIRVIVITGDNRNTAESICRQIGVFGEDEDLTGKSFTGREFDALSESEKLEAVKKASLFSRTEPSHKSKLVDLLQSLGHVVAMTGDGVNDAPALKKADIGVAMGTGTDVAKLAADMVLTDDNFATITVAVEEGRSIYSNTQQFIRYLISSNIGEVVSIFLTAALGMPEALIPVQLLWVNLVTDGLPATALSFNPPDHDVMRRAPRKRDEPLVGGWLLFRYLAIGTYVGAATVFGYIWWFVYNPEGPQISFWQLSHFHKCSAQFPEIGCEMFSNEMSRSASTVSLSILVVIEMLNAMNALSSSESLLAFPLWNNMMLVYAIILSMTLHFAILYIPFLQTLFSILPLNWTEWKAVLAISAPVVAIDELLKYAERRLYTLPAIAGEQQNGVAFKPKKA.

The Cytoplasmic segment spans residues 1 to 25 (MNNEALAEDPPTPLWELVLEQFKDQ). The chain crosses the membrane as a helical span at residues 26-46 (LVLILLGSAAVSFVLALFEEG). Over 47-49 (DDW) the chain is Lumenal. The chain crosses the membrane as a helical span at residues 50-70 (TAFVDPVVILTILILNAVVGV). Over 71-217 (TQESSAEKAI…PTPLKQKLND (147 aa)) the chain is Cytoplasmic. A helical transmembrane segment spans residues 218–238 (FGDMLAKVITVICVLVWLINV). The Lumenal segment spans residues 239–262 (EHFNDPAHGGWAKGAIYYLKIAVS). A helical transmembrane segment spans residues 263–283 (LGVAAIPEGLAVVITTCLALG). Residues Val-265, Ala-266, Ile-268, and Glu-270 each coordinate Ca(2+). Residues 284 to 718 (TRKMAAKNAV…GRSIYSNTQQ (435 aa)) are Cytoplasmic-facing. Catalysis depends on Asp-312, which acts as the 4-aspartylphosphate intermediate. Asp-312 and Thr-314 together coordinate Mg(2+). ATP-binding residues include Thr-314, Glu-402, Arg-453, Lys-473, Arg-518, Arg-637, and Lys-643. Asp-662 serves as a coordination point for Mg(2+). Asn-665 lines the ATP pocket. The helical transmembrane segment at 719-741 (FIRYLISSNIGEVVSIFLTAALG) threads the bilayer. Ca(2+) contacts are provided by Asn-727 and Glu-730. Over 742-750 (MPEALIPVQ) the chain is Lumenal. A helical transmembrane segment spans residues 751-770 (LLWVNLVTDGLPATALSFNP). Positions 755, 758, and 759 each coordinate Ca(2+). The Cytoplasmic portion of the chain corresponds to 771–795 (PDHDVMRRAPRKRDEPLVGGWLLFR). A helical membrane pass occupies residues 796–816 (YLAIGTYVGAATVFGYIWWFV). Residues 817-854 (YNPEGPQISFWQLSHFHKCSAQFPEIGCEMFSNEMSRS) lie on the Lumenal side of the membrane. A helical membrane pass occupies residues 855 to 875 (ASTVSLSILVVIEMLNAMNAL). Residue Glu-867 coordinates Ca(2+). The Cytoplasmic portion of the chain corresponds to 876–891 (SSSESLLAFPLWNNMM). The helical transmembrane segment at 892-912 (LVYAIILSMTLHFAILYIPFL) threads the bilayer. Residues 913–917 (QTLFS) are Lumenal-facing. Residues 918-938 (ILPLNWTEWKAVLAISAPVVA) form a helical membrane-spanning segment. Over 939-971 (IDELLKYAERRLYTLPAIAGEQQNGVAFKPKKA) the chain is Cytoplasmic.

Belongs to the cation transport ATPase (P-type) (TC 3.A.3) family. Requires Mg(2+) as cofactor.

It is found in the endoplasmic reticulum membrane. The enzyme catalyses Ca(2+)(in) + ATP + H2O = Ca(2+)(out) + ADP + phosphate + H(+). Functionally, magnesium-dependent enzyme catalyzes the hydrolysis of ATP coupled with the translocation of calcium from the cytosol to the endoplasmic reticulum lumen. Its activity is coupled to the unfolded protein response (UPR) and Ca(2+) import into the endoplasmioc reticulum is important for redox homeostasis, virulence, cell wall biosynthesis, and resistance to antifungal compounds that inhibit Ca2+ signaling. With pmrA, promotes radial growth and conidiation. The chain is Endoplasmic reticulum calcium ATPase srcA (srcA) from Aspergillus fumigatus (strain ATCC MYA-4609 / CBS 101355 / FGSC A1100 / Af293) (Neosartorya fumigata).